The chain runs to 384 residues: MSWQEKINAALDARRAADALRRRYPVAQGAGRWLVADDRQYLNFSSNDYLGLSHHPQIIRAWQQGAEQFGVGSGGSGHVSGYSVAHQALEEELAEWLGYSRALLFISGFAANQAVIAAMMAKEDRIVADRLSHASLLEAASLSPSQLRRFVHNDVTHLARLLASPCPGQQLVVTEGVFSMDGDSAPLAEIQQVTQQHNGWLMVDDAHGTGVIGEQGRGSCWLQKVKPELLVVTFGKGFGVSGAAVLCSSTVADYLLQFARHLIYNTSMPPAQAQALRASLAVIRRDEGDARREKLVSLIARFRAGVQDLPFTLADSCSAIQPLIVGDNSRALQLAEKLRQQGCWVTAIRPPTVPAGTARLRLTLTAAHEMQDIDRLLEVLHGNG.

A substrate-binding site is contributed by R21. A pyridoxal 5'-phosphate-binding site is contributed by 108–109 (GF). A substrate-binding site is contributed by H133. Residues S179, H207, and T233 each coordinate pyridoxal 5'-phosphate. Residue K236 is modified to N6-(pyridoxal phosphate)lysine. A substrate-binding site is contributed by T352.

This sequence belongs to the class-II pyridoxal-phosphate-dependent aminotransferase family. BioF subfamily. Homodimer. Pyridoxal 5'-phosphate serves as cofactor.

It carries out the reaction 6-carboxyhexanoyl-[ACP] + L-alanine + H(+) = (8S)-8-amino-7-oxononanoate + holo-[ACP] + CO2. It functions in the pathway cofactor biosynthesis; biotin biosynthesis. Its function is as follows. Catalyzes the decarboxylative condensation of pimeloyl-[acyl-carrier protein] and L-alanine to produce 8-amino-7-oxononanoate (AON), [acyl-carrier protein], and carbon dioxide. The chain is 8-amino-7-oxononanoate synthase from Shigella boydii serotype 18 (strain CDC 3083-94 / BS512).